The primary structure comprises 501 residues: Lysine--tRNA ligase (501 aa).

2 residues coordinate Mg(2+): Glu412 and Glu419.

This sequence belongs to the class-II aminoacyl-tRNA synthetase family. Homodimer. Mg(2+) serves as cofactor.

It is found in the cytoplasm. It carries out the reaction tRNA(Lys) + L-lysine + ATP = L-lysyl-tRNA(Lys) + AMP + diphosphate. This Chlorobium luteolum (strain DSM 273 / BCRC 81028 / 2530) (Pelodictyon luteolum) protein is Lysine--tRNA ligase.